A 765-amino-acid polypeptide reads, in one-letter code: Amine oxidase [copper-containing] 3 (765 aa).

Residues 1–6 lie on the Cytoplasmic side of the membrane; that stretch reads MTQKTT. A helical; Signal-anchor for type II membrane protein membrane pass occupies residues 7–27; that stretch reads LVLLALAVITIFALVCVLLAG. Over 28 to 765 the chain is Extracellular; it reads RSGDGGGLSQ…SHGGFAYRDN (738 aa). A glycan (N-linked (GlcNAc...) asparagine) is linked at Asn-137. A disulfide bridge connects residues Cys-198 and Cys-199. N-linked (GlcNAc...) asparagine glycosylation is found at Asn-232 and Asn-294. Asp-386 serves as the catalytic Proton acceptor. Residues Cys-404 and Cys-430 are joined by a disulfide bond. The Schiff-base intermediate with substrate; via topaquinone role is filled by Tyr-471. The residue at position 471 (Tyr-471) is a 2',4',5'-topaquinone. Positions 520 and 522 each coordinate Cu(2+). The Ca(2+) site is built by Asp-529, Leu-530, Asp-531, and Glu-572. The N-linked (GlcNAc...) asparagine glycan is linked to Asn-592. Position 641 (Glu-641) interacts with Ca(2+). Asn-659 carries an N-linked (GlcNAc...) asparagine glycan. Phe-663 provides a ligand contact to Ca(2+). The N-linked (GlcNAc...) asparagine glycan is linked to Asn-666. The Ca(2+) site is built by Glu-667, Asp-673, and Leu-674. His-684 contributes to the Cu(2+) binding site. Cys-734 and Cys-741 form a disulfide bridge.

The protein belongs to the copper/topaquinone oxidase family. As to quaternary structure, homodimer; disulfide-linked. Probably forms heterodimers with AOC2. It depends on Cu(2+) as a cofactor. Requires Ca(2+) as cofactor. L-topaquinone is required as a cofactor. Post-translationally, topaquinone (TPQ) is generated by copper-dependent autoxidation of a specific tyrosyl residue. In terms of processing, N- and O-glycosylated.

Its subcellular location is the cell membrane. It carries out the reaction methylamine + O2 + H2O = formaldehyde + H2O2 + NH4(+). The enzyme catalyses benzylamine + O2 + H2O = benzaldehyde + H2O2 + NH4(+). It catalyses the reaction 2-phenylethylamine + O2 + H2O = 2-phenylacetaldehyde + H2O2 + NH4(+). Its function is as follows. Catalyzes the oxidative deamination of primary amines to the corresponding aldehydes with the concomitant production of hydrogen peroxide and ammonia. Has a preference for the primary monoamines methylamine and benzylamine. Could also act on 2-phenylethylamine but much less efficiently. At endothelial cells surface can also function as a cell adhesion protein that participates in lymphocyte extravasation and recirculation by mediating the binding of lymphocytes to peripheral lymph node vascular endothelial cells in an L-selectin-independent fashion. The polypeptide is Amine oxidase [copper-containing] 3 (Mus musculus (Mouse)).